The sequence spans 202 residues: LexA repressor (202 aa).

Residues 28-48 (RAEIAQQLGFRSPNAAEEHLK) constitute a DNA-binding region (H-T-H motif). Catalysis depends on for autocatalytic cleavage activity residues Ser-119 and Lys-156.

The protein belongs to the peptidase S24 family. Homodimer.

It catalyses the reaction Hydrolysis of Ala-|-Gly bond in repressor LexA.. Its function is as follows. Represses a number of genes involved in the response to DNA damage (SOS response), including recA and lexA. Binds to the 16 bp palindromic sequence 5'-CTGTATATATATACAG-3'. In the presence of single-stranded DNA, RecA interacts with LexA causing an autocatalytic cleavage which disrupts the DNA-binding part of LexA, leading to derepression of the SOS regulon and eventually DNA repair. The chain is LexA repressor from Pectobacterium carotovorum subsp. carotovorum (strain PC1).